An 82-amino-acid chain; its full sequence is Conotoxin Gla-TxX (82 aa).

A signal peptide spans 1–25 (MSGHTSVSFLLLSIVALGMVATVIC). Residues Glu-30, Glu-34, Glu-37, Glu-40, and Glu-41 each carry the 4-carboxyglutamate modification. At Asn-72 the chain carries Asparagine amide. The propeptide occupies 77 to 82 (LIHMQK).

Post-translationally, contains 4 disulfide bonds. As to expression, expressed by the venom duct.

Its subcellular location is the secreted. The protein is Conotoxin Gla-TxX of Conus textile (Cloth-of-gold cone).